The chain runs to 463 residues: MSKKSTFIILAAGEGKRMKSKYSKVVQKIMGKPMILYIIDEIEKNFEDGRIVVVVGNKKEDVYKVLEGRNVRFAYQEKQLGTAHAVMCAMSEISDDSEDVFVLYGDVPFIKADTLKKLSQKRKEEAAALCLLTAIFENPYGYGRIIADENGNVLKIVEERDATEEQRKIKKINPGFYCFEKQELVNVLSKIDNKNSQNEYYLTDAIEILNRSGKKVVKVTVEDNFEVMGINSRYELFVAEQELKLRINKEHLSKGVQIIDIYSTYIHPDAQIGKDTVIYPGTFILGKTSIGEDCVIGPQSYIVDSKIGNNCHILFSVIENSEIKDNVKIGPYAHLRPNSLLEEGVKIGNFVEIKNSKLGKNTKSAHLTYIGDADIGENVNLGCGTIFVNYDGYKKHRTVVENNAFIGCNSNLIAPVKIGENAYVAAGSTITEDVPANALAIARERQTNKEGWVLRRKQMYENR.

The interval 1–233 is pyrophosphorylase; the sequence is MSKKSTFIIL…NFEVMGINSR (233 aa). Residues 10 to 13, Lys-24, Gln-76, 81 to 82, 104 to 106, Gly-143, Glu-158, Asn-173, and Asn-231 contribute to the UDP-N-acetyl-alpha-D-glucosamine site; these read LAAG, GT, and YGD. Position 106 (Asp-106) interacts with Mg(2+). Asn-231 serves as a coordination point for Mg(2+). The tract at residues 234 to 254 is linker; the sequence is YELFVAEQELKLRINKEHLSK. Residues 255 to 463 form an N-acetyltransferase region; it reads GVQIIDIYST…LRRKQMYENR (209 aa). Residues Arg-336 and Lys-354 each coordinate UDP-N-acetyl-alpha-D-glucosamine. The Proton acceptor role is filled by His-366. Tyr-369 and Asn-380 together coordinate UDP-N-acetyl-alpha-D-glucosamine. Residues 389–390, Ala-426, and Arg-443 each bind acetyl-CoA; that span reads NY.

This sequence in the N-terminal section; belongs to the N-acetylglucosamine-1-phosphate uridyltransferase family. The protein in the C-terminal section; belongs to the transferase hexapeptide repeat family. In terms of assembly, homotrimer. The cofactor is Mg(2+).

It localises to the cytoplasm. The catalysed reaction is alpha-D-glucosamine 1-phosphate + acetyl-CoA = N-acetyl-alpha-D-glucosamine 1-phosphate + CoA + H(+). The enzyme catalyses N-acetyl-alpha-D-glucosamine 1-phosphate + UTP + H(+) = UDP-N-acetyl-alpha-D-glucosamine + diphosphate. Its pathway is nucleotide-sugar biosynthesis; UDP-N-acetyl-alpha-D-glucosamine biosynthesis; N-acetyl-alpha-D-glucosamine 1-phosphate from alpha-D-glucosamine 6-phosphate (route II): step 2/2. It functions in the pathway nucleotide-sugar biosynthesis; UDP-N-acetyl-alpha-D-glucosamine biosynthesis; UDP-N-acetyl-alpha-D-glucosamine from N-acetyl-alpha-D-glucosamine 1-phosphate: step 1/1. The protein operates within bacterial outer membrane biogenesis; LPS lipid A biosynthesis. In terms of biological role, catalyzes the last two sequential reactions in the de novo biosynthetic pathway for UDP-N-acetylglucosamine (UDP-GlcNAc). The C-terminal domain catalyzes the transfer of acetyl group from acetyl coenzyme A to glucosamine-1-phosphate (GlcN-1-P) to produce N-acetylglucosamine-1-phosphate (GlcNAc-1-P), which is converted into UDP-GlcNAc by the transfer of uridine 5-monophosphate (from uridine 5-triphosphate), a reaction catalyzed by the N-terminal domain. The protein is Bifunctional protein GlmU of Caldicellulosiruptor saccharolyticus (strain ATCC 43494 / DSM 8903 / Tp8T 6331).